The following is a 441-amino-acid chain: Endothelin receptor type B (441 aa).

A signal peptide spans 1–26; it reads MQPPPSLCGLALLALVLACGMAEVWG. The Extracellular portion of the chain corresponds to 27–100; sequence EEREMPSAPA…RPTEIKDTFK (74 aa). Residues 30–90 form a disordered region; it reads EMPSAPATPP…APRRTPPPCQ (61 aa). Residues 47–65 show a composition bias toward polar residues; the sequence is LTPSTKTSWPRDSNASLPR. N60 is a glycosylation site (N-linked (GlcNAc...) asparagine). A helical transmembrane segment spans residues 101–125; it reads YINTVVSCLVFVLGIIGNSTLLRII. The Cytoplasmic portion of the chain corresponds to 126–136; the sequence is YKNKCMRNGPN. A helical membrane pass occupies residues 137–162; sequence ILIASLALGDLLHIIIDIPINVYKLL. The Extracellular segment spans residues 163–174; the sequence is AEDWPFGAEMCK. C173 and C254 are oxidised to a cystine. Residues 175-196 traverse the membrane as a helical segment; that stretch reads LVPFIQKASVGITVLSLCALSI. The Cytoplasmic segment spans residues 197–217; the sequence is DRYRAVASWSRIKGIGVPKWT. A helical transmembrane segment spans residues 218–242; it reads AVEIVLIWVVSVILAVPEAIGFNLV. Residues 243-270 are Extracellular-facing; that stretch reads TIDYKGSYLRICLLNPTQKTAFMQFYKT. Residues 271–295 form a helical membrane-spanning segment; it reads AKDWWLFSFYFCLPLAITAFFYTLM. Residues 296–323 lie on the Cytoplasmic side of the membrane; that stretch reads TCEMLRKKSGMQIALNDHLKQRREVAKT. Residue S304 is modified to Phosphoserine. Residues 324 to 349 form a helical membrane-spanning segment; that stretch reads VFCLVLVFGLCWLALHLSRILKLTLY. At 350–361 the chain is on the extracellular side; it reads DQNDPNRCELLS. Residues 362 to 388 form a helical membrane-spanning segment; that stretch reads FLLVLDYIGINMASLNSCINPIALYLV. Residues 389–441 are Cytoplasmic-facing; that stretch reads SKRFKNCFKSCLCCWCQSFEEKQSLEEKQSCLKFKANDHGYDNFRSSNKYSSS. Residues C402 and C404 are each lipidated (S-palmitoyl cysteine). S418 carries the phosphoserine modification. Residue Y438 is modified to Phosphotyrosine. S439, S440, and S441 each carry phosphoserine.

It belongs to the G-protein coupled receptor 1 family. Endothelin receptor subfamily. EDNRB sub-subfamily.

Its subcellular location is the cell membrane. Non-specific receptor for endothelin 1, 2, and 3. Mediates its action by association with G proteins that activate a phosphatidylinositol-calcium second messenger system. The sequence is that of Endothelin receptor type B (EDNRB) from Oryctolagus cuniculus (Rabbit).